A 360-amino-acid polypeptide reads, in one-letter code: Peptide chain release factor 1 (360 aa).

Position 235 is an N5-methylglutamine (glutamine 235).

This sequence belongs to the prokaryotic/mitochondrial release factor family. Post-translationally, methylated by PrmC. Methylation increases the termination efficiency of RF1.

The protein localises to the cytoplasm. Peptide chain release factor 1 directs the termination of translation in response to the peptide chain termination codons UAG and UAA. The polypeptide is Peptide chain release factor 1 (Bordetella pertussis (strain Tohama I / ATCC BAA-589 / NCTC 13251)).